The sequence spans 642 residues: Threonine--tRNA ligase (642 aa).

The TGS domain maps to 1–63; sequence MNDITVTLPD…YNDARVVIVT (63 aa). The interval 242–533 is catalytic; it reads DHRKIGQELD…LIEHFNGKFP (292 aa). Zn(2+) contacts are provided by Cys-334, His-385, and His-510.

This sequence belongs to the class-II aminoacyl-tRNA synthetase family. Homodimer. Zn(2+) serves as cofactor.

The protein localises to the cytoplasm. It catalyses the reaction tRNA(Thr) + L-threonine + ATP = L-threonyl-tRNA(Thr) + AMP + diphosphate + H(+). In terms of biological role, catalyzes the attachment of threonine to tRNA(Thr) in a two-step reaction: L-threonine is first activated by ATP to form Thr-AMP and then transferred to the acceptor end of tRNA(Thr). This chain is Threonine--tRNA ligase, found in Haloquadratum walsbyi (strain DSM 16790 / HBSQ001).